The primary structure comprises 95 residues: Defensin-1 (95 aa).

The first 19 residues, 1 to 19 (MKIYFIVGLLFMAMVAIMA), serve as a signal peptide directing secretion. Positions 20 to 43 (APVEDEFEPLEHFENEERADRHRR) are excised as a propeptide. 3 disulfides stabilise this stretch: C46–C74, C60–C79, and C64–C81. F94 is subject to Phenylalanine amide.

It localises to the secreted. In terms of biological role, found in royal jelly and in hemolymph, potent antibacterial protein against Gram-positive bacteria at low concentration. This Apis mellifera carnica (Carniolan honeybee) protein is Defensin-1.